Consider the following 154-residue polypeptide: Cold shock domain-containing protein C2 (154 aa).

Disordered stretches follow at residues 1-22 (MTSESTSPPVVPPLHSPKSPVW) and 36-62 (ERGGGVSPRDLPSPLPTKRTRTYSATA). Ser19 is subject to Phosphoserine. In terms of domain architecture, CSD spans 69 to 136 (VFKGVCKQFS…KFQAVEVVLT (68 aa)).

In terms of tissue distribution, brain-specific. Expression restricted to the pyramidal neurons of the cerebral cortex and in the Purkinje cells of the cerebellum.

It localises to the nucleus. The protein resides in the cytoplasm. RNA-binding factor which binds specifically to the very 3'-UTR ends of both histone H1 and H3.3 mRNAs, encompassing the polyadenylation signal. Might play a central role in the negative regulation of histone variant synthesis in the developing brain. This Rattus norvegicus (Rat) protein is Cold shock domain-containing protein C2 (Csdc2).